Reading from the N-terminus, the 219-residue chain is uncharacterized protein (219 aa).

A signal peptide spans 1 to 22 (MKKRRKICYCNTALLLMILLAG). Cys-23 carries N-palmitoyl cysteine lipidation. Cys-23 carries the S-diacylglycerol cysteine lipid modification. Residues 26-89 (SKDGEAQQPS…SAEEKSKEDN (64 aa)) form a disordered region. A compositionally biased stretch (polar residues) spans 32–42 (QQPSNQASAVQ). Over residues 43-61 (TDEKHTEPEESTKIRKDEA) the composition is skewed to basic and acidic residues.

The protein resides in the cell membrane. This is an uncharacterized protein from Bacillus subtilis (strain 168).